A 151-amino-acid polypeptide reads, in one-letter code: Small ribosomal subunit protein uS15 (151 aa).

Belongs to the universal ribosomal protein uS15 family.

This chain is Small ribosomal subunit protein uS15 (RPS13), found in Lumbricus rubellus (Humus earthworm).